A 311-amino-acid chain; its full sequence is Olfactory receptor 10G7 (311 aa).

Residues 1 to 23 (MSNATLLTAFILTGLPHAPGLDA) lie on the Extracellular side of the membrane. Asn3 carries N-linked (GlcNAc...) asparagine glycosylation. Residues 24–44 (PLFGIFLVVYVLTVLGNLLIL) traverse the membrane as a helical segment. The Cytoplasmic segment spans residues 45–52 (LVIRVDSH). A helical transmembrane segment spans residues 53 to 73 (LHTPMYYFLTNLSFIDMWFST). Topologically, residues 74–98 (VTVPKMLMTLVSPSGRTISFHSCVA) are extracellular. A disulfide bond links Cys96 and Cys188. A helical membrane pass occupies residues 99-119 (QLYFFHFLGSTECFLYTVMSY). At 120-138 (DRYLAISYPLRYTNMMTGR) the chain is on the cytoplasmic side. A helical membrane pass occupies residues 139–159 (SCALLATGTWLSGSLHSAVQT). The Extracellular portion of the chain corresponds to 160-196 (ILTFHLPYCGPNQIQHYFCDAPPILKLACADTSANEM). Residues 197–216 (VIFVNIGLVASGCFVLIVLS) form a helical membrane-spanning segment. At 217–236 (YVSIVCSILRIRTSEGRHRA) the chain is on the cytoplasmic side. The chain crosses the membrane as a helical span at residues 237–257 (FQTCASHCIVVLCFFGPGLFI). At 258-268 (YLRPGSRDALH) the chain is on the extracellular side. Residues 269–289 (GVVAVFYTTLTPLFNPVVYTL) form a helical membrane-spanning segment. Residues 290-311 (RNKEVKKALLKLKNGSVFAQGE) are Cytoplasmic-facing.

Belongs to the G-protein coupled receptor 1 family.

Its subcellular location is the cell membrane. Its function is as follows. Odorant receptor. This is Olfactory receptor 10G7 (OR10G7) from Homo sapiens (Human).